We begin with the raw amino-acid sequence, 86 residues long: Small ribosomal subunit protein bS20 (86 aa).

The protein belongs to the bacterial ribosomal protein bS20 family.

Functionally, binds directly to 16S ribosomal RNA. This is Small ribosomal subunit protein bS20 from Paenarthrobacter aurescens (strain TC1).